The sequence spans 753 residues: Striatin-4 (753 aa).

Residues 10-65 form a disordered region; that stretch reads VAAAASSCRPLGSGAGPGPTGAAPVSAPAPGPGPAGKGGGGGGSPGPTAGPEPLSL. The span at 43–54 shows a compositional bias: gly residues; sequence PAGKGGGGGGSP. Phosphoserine is present on S53. Positions 69 to 136 form a coiled coil; it reads LHFIQHEWAR…QERAKYHKLK (68 aa). The interval 71-79 is caveolin-binding; the sequence is FIQHEWARF. Positions 165–182 are calmodulin-binding; the sequence is ENSPLVWKEGRQLLRQYL. S206 is modified (phosphoserine). 3 disordered regions span residues 213-232, 271-345, and 363-382; these read VEPS…LSGG, CEDE…SPHE, and VDGL…QPRP. Acidic residues-rich tracts occupy residues 271–283 and 302–317; these read CEDE…DELD and EMED…DAIN. Position 276 is a phosphoserine (S276). Residues 332–345 show a composition bias toward basic and acidic residues; the sequence is PDPRRCTVDGSPHE. The segment covering 370 to 380 has biased composition (pro residues); it reads VTGPPPGTPQP. WD repeat units lie at residues 436-475, 489-528, 542-581, 587-628, 635-674, 677-716, and 723-753; these read SHYD…TAKK, AHRG…MDPY, GHGD…PACL, ASEH…ALLT, SGPT…PVHS, AHLD…CVQE, and KHEE…KVFV.

It belongs to the WD repeat striatin family. As to quaternary structure, part of the core of STRIPAK complexes composed of PP2A catalytic and scaffolding subunits, the striatins (PP2A regulatory subunits), the striatin-associated proteins MOB4, STRIP1 and STRIP2, PDCD10 and members of the STE20 kinases, such as STK24 and STK26. Interacts with CTTNBP2NL.

The protein resides in the cytoplasm. Calmodulin-binding scaffolding protein which is the center of the striatin-interacting phosphatase and kinase (STRIPAK) complexes. STRIPAK complexes have critical roles in protein (de)phosphorylation and are regulators of multiple signaling pathways including Hippo, MAPK, nuclear receptor and cytoskeleton remodeling. Different types of STRIPAK complexes are involved in a variety of biological processes such as cell growth, differentiation, apoptosis, metabolism and immune regulation. Key regulator of the expanded Hippo signaling pathway by interacting and allowing the inhibition of MAP4K kinases by the STRIPAK complex. The protein is Striatin-4 of Homo sapiens (Human).